Here is a 131-residue protein sequence, read N- to C-terminus: Cilia- and flagella-associated protein 144 (131 aa).

The interval 79–99 is disordered; the sequence is TKKYSEPQTESQEIGWNTTPL. Positions 84-99 are enriched in polar residues; that stretch reads EPQTESQEIGWNTTPL.

Belongs to the CFAP144 family. As to expression, expressed in choroid plexus (at protein level). Expressed by motile ciliated cells in choroid plexus.

It localises to the cytoplasm. The protein localises to the cytoskeleton. The protein resides in the cilium axoneme. Its subcellular location is the flagellum axoneme. Functionally, microtubule inner protein (MIP) part of the dynein-decorated doublet microtubules (DMTs) in cilia axoneme, which is required for motile cilia beating. The sequence is that of Cilia- and flagella-associated protein 144 (CFAP144) from Gallus gallus (Chicken).